Consider the following 360-residue polypeptide: Mannonate dehydratase (360 aa).

This sequence belongs to the mannonate dehydratase family. It depends on Fe(2+) as a cofactor. The cofactor is Mn(2+).

It carries out the reaction D-mannonate = 2-dehydro-3-deoxy-D-gluconate + H2O. Its pathway is carbohydrate metabolism; pentose and glucuronate interconversion. Functionally, catalyzes the dehydration of D-mannonate. The protein is Mannonate dehydratase (uxuA) of Thermotoga neapolitana.